Reading from the N-terminus, the 60-residue chain is UPF0337 protein SACOL1680 (60 aa).

Belongs to the UPF0337 (CsbD) family.

This Staphylococcus aureus (strain COL) protein is UPF0337 protein SACOL1680.